We begin with the raw amino-acid sequence, 464 residues long: MEEHYYVSIDIGSSSVKTIVGEKFHNGINVIGTGQTYTSGIKNGLIDDFDIARQAIKDTIKKASIASGVDIKDVFLKLPIIGTEVYDESNEIEFYEDTEIDGTHIESVLEGIRDKNDVPETEVINVFPIRFVVDKDNEVSDPKELIARHSLKVDAGVIAIQKSILINMIKCVEACGVDVLDVYSDAYNYGSILTPTEKELGACVIDIGEDLTQVAFYERGELVDAESIEMAGRDITDDIAQGLNTTYDTAEKVKHQYGHAFYDSASDQDVFSVDQVDSDEHVQYTQKDLSDFIEQRVEDIFFEVFDVLQELGLTKVNGGFVVTGGSANLLGVKELLQDMVSEKVRIHTPSQMGIRKPEFSSAISTISSSIAFDELLDYVTISYQDNEEFEEEVIESDKDSETKSSGFDWFKRKSNKKENDEVAPEAPREESYEDRENHLEDEQQTEGKAKEESKFKKLMKSLFE.

Residues E392 to E464 form a disordered region. Residues K416–F455 are compositionally biased toward basic and acidic residues.

It belongs to the FtsA/MreB family. In terms of assembly, self-interacts. Interacts with FtsZ.

The protein localises to the cell membrane. Functionally, cell division protein that is involved in the assembly of the Z ring. May serve as a membrane anchor for the Z ring. The sequence is that of Cell division protein FtsA from Staphylococcus epidermidis (strain ATCC 35984 / DSM 28319 / BCRC 17069 / CCUG 31568 / BM 3577 / RP62A).